Reading from the N-terminus, the 401-residue chain is Forkhead box protein H1 (401 aa).

A disordered region spans residues 32–57; that stretch reads MGPRDNSQLRPPEAESLSKTPKRRKK. The segment at residues 64–163 is a DNA-binding region (fork-head); it reads KPPYTYLAMI…QNTALCRRWQ (100 aa). The tract at residues 179-251 is disordered; that stretch reads VLHGQPYQPP…PSSSSETPLW (73 aa). The span at 185-195 shows a compositional bias: pro residues; it reads YQPPSPPPPPR. The segment covering 221 to 230 has biased composition (polar residues); the sequence is GQSTAAQAGT. Residues 307 to 390 are SMAD-interaction domain (SID); it reads LWGQLPTSYL…VSHPRDLAAP (84 aa). Positions 311–315 match the Fast/FoxH1 motif 1 (FM1) motif; the sequence is LPTSY. Positions 321–327 match the Fast/FoxH1 motif 2 (FM2) motif; sequence PNVVMPL. An SMAD interaction motif (SIM) motif is present at residues 363–384; sequence LDSLFQGVPPNKSIYDVWVSHP.

Interacts with the MH2 domains of SMAD2 and SMAD3.

It is found in the nucleus. In terms of biological role, transcriptional activator. Recognizes and binds to the DNA sequence 5'-TGT[GT][GT]ATT-3'. Required for induction of the goosecoid (GSC) promoter by TGF-beta or activin signaling. Forms a transcriptionally active complex containing FOXH1/SMAD2/SMAD4 on a site on the GSC promoter called TARE (TGF-beta/activin response element). In Mus musculus (Mouse), this protein is Forkhead box protein H1 (Foxh1).